A 400-amino-acid chain; its full sequence is Argininosuccinate synthase (400 aa).

Residues Ala-10–Ser-18 and Ala-38 contribute to the ATP site. Tyr-89 serves as a coordination point for L-citrulline. Gly-119 contributes to the ATP binding site. L-aspartate is bound by residues Thr-121, Asn-125, and Asp-126. Residue Asn-125 coordinates L-citrulline. L-citrulline contacts are provided by Arg-129, Ser-177, Ser-186, Glu-262, and Tyr-274.

The protein belongs to the argininosuccinate synthase family. Type 1 subfamily. In terms of assembly, homotetramer.

It localises to the cytoplasm. The enzyme catalyses L-citrulline + L-aspartate + ATP = 2-(N(omega)-L-arginino)succinate + AMP + diphosphate + H(+). The protein operates within amino-acid biosynthesis; L-arginine biosynthesis; L-arginine from L-ornithine and carbamoyl phosphate: step 2/3. In Prochlorococcus marinus (strain NATL2A), this protein is Argininosuccinate synthase.